The following is a 337-amino-acid chain: Tetraacyldisaccharide 4'-kinase (337 aa).

72-79 is a binding site for ATP; the sequence is TVGGSGKT.

This sequence belongs to the LpxK family.

It carries out the reaction a lipid A disaccharide + ATP = a lipid IVA + ADP + H(+). Its pathway is glycolipid biosynthesis; lipid IV(A) biosynthesis; lipid IV(A) from (3R)-3-hydroxytetradecanoyl-[acyl-carrier-protein] and UDP-N-acetyl-alpha-D-glucosamine: step 6/6. In terms of biological role, transfers the gamma-phosphate of ATP to the 4'-position of a tetraacyldisaccharide 1-phosphate intermediate (termed DS-1-P) to form tetraacyldisaccharide 1,4'-bis-phosphate (lipid IVA). This is Tetraacyldisaccharide 4'-kinase from Shewanella sediminis (strain HAW-EB3).